The primary structure comprises 79 residues: MPKRILQGVVVSDKMEKTVVVSVERRVMHPIYKKFIRRSKKYHAHDENNVFKTGETIRIRECAPISKTKCWEVIVEPQA.

The protein belongs to the universal ribosomal protein uS17 family. Part of the 30S ribosomal subunit.

One of the primary rRNA binding proteins, it binds specifically to the 5'-end of 16S ribosomal RNA. The polypeptide is Small ribosomal subunit protein uS17 (Paramagnetospirillum magneticum (strain ATCC 700264 / AMB-1) (Magnetospirillum magneticum)).